Here is a 176-residue protein sequence, read N- to C-terminus: Probable DNA-directed RNA polymerase subunit delta (176 aa).

Positions 14-81 constitute an HTH HARE-type domain; sequence LSLIDVAHFI…GNNMWGLRAW (68 aa). 2 disordered regions span residues 91 to 119 and 140 to 176; these read VQTQ…VDYD and DEDE…PEDK. 2 stretches are compositionally biased toward acidic residues: residues 105 to 119 and 159 to 176; these read DDDD…VDYD and TVED…PEDK.

It belongs to the RpoE family. RNAP is composed of a core of 2 alpha, a beta and a beta' subunits. The core is associated with a delta subunit and one of several sigma factors.

Functionally, participates in both the initiation and recycling phases of transcription. In the presence of the delta subunit, RNAP displays an increased specificity of transcription, a decreased affinity for nucleic acids, and an increased efficiency of RNA synthesis because of enhanced recycling. The sequence is that of Probable DNA-directed RNA polymerase subunit delta from Listeria welshimeri serovar 6b (strain ATCC 35897 / DSM 20650 / CCUG 15529 / CIP 8149 / NCTC 11857 / SLCC 5334 / V8).